The chain runs to 728 residues: Catalase-peroxidase (728 aa).

Positions 91-218 (WHSAGTYRTA…LAAVQMGLIY (128 aa)) form a cross-link, tryptophyl-tyrosyl-methioninium (Trp-Tyr) (with M-244). The Proton acceptor role is filled by His-92. The tryptophyl-tyrosyl-methioninium (Tyr-Met) (with W-91) cross-link spans 218 to 244 (YVNPEGPDGNPDPVAAARDIRDTFARM). Residue His-259 participates in heme b binding.

It belongs to the peroxidase family. Peroxidase/catalase subfamily. As to quaternary structure, homodimer or homotetramer. It depends on heme b as a cofactor. In terms of processing, formation of the three residue Trp-Tyr-Met cross-link is important for the catalase, but not the peroxidase activity of the enzyme.

It catalyses the reaction H2O2 + AH2 = A + 2 H2O. The catalysed reaction is 2 H2O2 = O2 + 2 H2O. Bifunctional enzyme with both catalase and broad-spectrum peroxidase activity. This is Catalase-peroxidase from Burkholderia pseudomallei (strain 1710b).